Consider the following 142-residue polypeptide: 3-hydroxyacyl-[acyl-carrier-protein] dehydratase FabZ (142 aa).

His-47 is an active-site residue.

It belongs to the thioester dehydratase family. FabZ subfamily.

The protein localises to the cytoplasm. The enzyme catalyses a (3R)-hydroxyacyl-[ACP] = a (2E)-enoyl-[ACP] + H2O. Functionally, involved in unsaturated fatty acids biosynthesis. Catalyzes the dehydration of short chain beta-hydroxyacyl-ACPs and long chain saturated and unsaturated beta-hydroxyacyl-ACPs. This is 3-hydroxyacyl-[acyl-carrier-protein] dehydratase FabZ from Thermoanaerobacter pseudethanolicus (strain ATCC 33223 / 39E) (Clostridium thermohydrosulfuricum).